We begin with the raw amino-acid sequence, 111 residues long: Cell division protein FtsL (111 aa).

Over Met-1 to Asp-26 the chain is Cytoplasmic. Residues Leu-27–Trp-47 form a helical membrane-spanning segment. Residues Ser-48–Lys-111 lie on the Periplasmic side of the membrane. A coiled-coil region spans residues Arg-51–Thr-85.

It belongs to the FtsL family.

It localises to the cell inner membrane. Its function is as follows. Essential cell division protein. This is Cell division protein FtsL from Geobacter sulfurreducens (strain ATCC 51573 / DSM 12127 / PCA).